We begin with the raw amino-acid sequence, 374 residues long: GDSL esterase/lipase At3g50400 (374 aa).

Positions 1–26 are cleaved as a signal peptide; the sequence is MKKSIFFVPVLVLFFFGSRFSRVASA. Ser41 functions as the Nucleophile in the catalytic mechanism. Residues Asn104 and Asn125 are each glycosylated (N-linked (GlcNAc...) asparagine). Residues Asp339 and His342 contribute to the active site.

The protein belongs to the 'GDSL' lipolytic enzyme family.

The protein localises to the secreted. This chain is GDSL esterase/lipase At3g50400, found in Arabidopsis thaliana (Mouse-ear cress).